The sequence spans 197 residues: Probable NADPH:quinone oxidoreductase 1 (197 aa).

It belongs to the SsuE family. In terms of assembly, homotetramer. It depends on FMN as a cofactor.

The enzyme catalyses a quinone + NADH + H(+) = a quinol + NAD(+). The catalysed reaction is a quinone + NADPH + H(+) = a quinol + NADP(+). Its function is as follows. The enzyme apparently serves as a quinone reductase in connection with conjugation reactions of hydroquinones involved in detoxification pathways. This chain is Probable NADPH:quinone oxidoreductase 1, found in Oryza sativa subsp. japonica (Rice).